We begin with the raw amino-acid sequence, 773 residues long: Acyl-homoserine lactone acylase PvdQ (773 aa).

An N-terminal signal peptide occupies residues 1 to 23 (MSRALPGFLFAGLSVAVVLPAQA). Positions 200–221 (SQQVQALQLAAARNERFALERG) are cleaved as a propeptide — spacer peptide. Ser222 serves as the catalytic Nucleophile.

It belongs to the peptidase S45 family. As to quaternary structure, heterodimer of an alpha subunit and a beta subunit processed from the same precursor.

Its subcellular location is the periplasm. It catalyses the reaction an N-acyl-L-homoserine lactone + H2O = L-homoserine lactone + a carboxylate. Functionally, catalyzes the deacylation of acyl-homoserine lactone (AHL or acyl-HSL), releasing homoserine lactone (HSL) and the corresponding fatty acid. Possesses a specificity for the degradation of long-chain acyl-HSLs (side chains of 11 to 14 carbons in length). The sequence is that of Acyl-homoserine lactone acylase PvdQ (pvdQ) from Pseudomonas syringae pv. tomato (strain ATCC BAA-871 / DC3000).